The following is a 212-amino-acid chain: Phosphoribosyl-dephospho-CoA transferase (212 aa).

Active-site residues include aspartate 139 and aspartate 141.

The protein belongs to the MdcG family.

The enzyme catalyses apo-[malonate decarboxylase ACP] + 2'-(5''-triphospho-alpha-D-ribosyl)-3'-dephospho-CoA = holo-[malonate decarboxylase ACP] + diphosphate. In terms of biological role, transfers 2'-(5-triphosphoribosyl)-3'-dephosphocoenzyme-A to the apo-[acyl-carrier-protein] of the malonate decarboxylase to yield holo-[acyl-carrier-protein]. The polypeptide is Phosphoribosyl-dephospho-CoA transferase (Azotobacter vinelandii (strain DJ / ATCC BAA-1303)).